The chain runs to 308 residues: 4-diphosphocytidyl-2-C-methyl-D-erythritol kinase (308 aa).

The active site involves K23. 108–118 serves as a coordination point for ATP; that stretch reads PVAAGIGGGSA. The active site involves D150.

Belongs to the GHMP kinase family. IspE subfamily.

The catalysed reaction is 4-CDP-2-C-methyl-D-erythritol + ATP = 4-CDP-2-C-methyl-D-erythritol 2-phosphate + ADP + H(+). The protein operates within isoprenoid biosynthesis; isopentenyl diphosphate biosynthesis via DXP pathway; isopentenyl diphosphate from 1-deoxy-D-xylulose 5-phosphate: step 3/6. Functionally, catalyzes the phosphorylation of the position 2 hydroxy group of 4-diphosphocytidyl-2C-methyl-D-erythritol. The protein is 4-diphosphocytidyl-2-C-methyl-D-erythritol kinase of Nitrobacter winogradskyi (strain ATCC 25391 / DSM 10237 / CIP 104748 / NCIMB 11846 / Nb-255).